Reading from the N-terminus, the 341-residue chain is Ketol-acid reductoisomerase (NADP(+)) (341 aa).

The KARI N-terminal Rossmann domain maps to 1 to 182 (MTELFYDDDA…GGTRAGVIKT (182 aa)). Residues 25 to 28 (YGSQ), serine 51, serine 53, and 83 to 86 (DQVQ) each bind NADP(+). Histidine 108 is a catalytic residue. NADP(+) is bound at residue glycine 134. The region spanning 183–328 (TFTEETETDL…RELRKLFSWI (146 aa)) is the KARI C-terminal knotted domain. Mg(2+)-binding residues include aspartate 191, glutamate 195, glutamate 227, and glutamate 231. A substrate-binding site is contributed by serine 252.

It belongs to the ketol-acid reductoisomerase family. Requires Mg(2+) as cofactor.

The enzyme catalyses (2R)-2,3-dihydroxy-3-methylbutanoate + NADP(+) = (2S)-2-acetolactate + NADPH + H(+). The catalysed reaction is (2R,3R)-2,3-dihydroxy-3-methylpentanoate + NADP(+) = (S)-2-ethyl-2-hydroxy-3-oxobutanoate + NADPH + H(+). The protein operates within amino-acid biosynthesis; L-isoleucine biosynthesis; L-isoleucine from 2-oxobutanoate: step 2/4. It participates in amino-acid biosynthesis; L-valine biosynthesis; L-valine from pyruvate: step 2/4. Functionally, involved in the biosynthesis of branched-chain amino acids (BCAA). Catalyzes an alkyl-migration followed by a ketol-acid reduction of (S)-2-acetolactate (S2AL) to yield (R)-2,3-dihydroxy-isovalerate. In the isomerase reaction, S2AL is rearranged via a Mg-dependent methyl migration to produce 3-hydroxy-3-methyl-2-ketobutyrate (HMKB). In the reductase reaction, this 2-ketoacid undergoes a metal-dependent reduction by NADPH to yield (R)-2,3-dihydroxy-isovalerate. In Renibacterium salmoninarum (strain ATCC 33209 / DSM 20767 / JCM 11484 / NBRC 15589 / NCIMB 2235), this protein is Ketol-acid reductoisomerase (NADP(+)).